A 24-amino-acid polypeptide reads, in one-letter code: Protein YriA (24 aa).

In Escherichia coli (strain K12), this protein is Protein YriA.